Consider the following 604-residue polypeptide: Proline--tRNA ligase (604 aa).

It belongs to the class-II aminoacyl-tRNA synthetase family. ProS type 1 subfamily. Homodimer.

The protein localises to the cytoplasm. The enzyme catalyses tRNA(Pro) + L-proline + ATP = L-prolyl-tRNA(Pro) + AMP + diphosphate. Its function is as follows. Catalyzes the attachment of proline to tRNA(Pro) in a two-step reaction: proline is first activated by ATP to form Pro-AMP and then transferred to the acceptor end of tRNA(Pro). As ProRS can inadvertently accommodate and process non-cognate amino acids such as alanine and cysteine, to avoid such errors it has two additional distinct editing activities against alanine. One activity is designated as 'pretransfer' editing and involves the tRNA(Pro)-independent hydrolysis of activated Ala-AMP. The other activity is designated 'posttransfer' editing and involves deacylation of mischarged Ala-tRNA(Pro). The misacylated Cys-tRNA(Pro) is not edited by ProRS. The chain is Proline--tRNA ligase from Nostoc punctiforme (strain ATCC 29133 / PCC 73102).